A 550-amino-acid polypeptide reads, in one-letter code: Putative golgin subfamily A member 6-like protein 19 (550 aa).

Residues 1-11 (MWPQPRLPPHP) show a composition bias toward pro residues. The segment at 1–77 (MWPQPRLPPH…DSATGVYGEG (77 aa)) is disordered. Residues 51-62 (NGSSPDTATSGG) show a composition bias toward polar residues. A coiled-coil region spans residues 157 to 405 (SKVEQLQDET…QERLRQQDER (249 aa)). A compositionally biased stretch (basic and acidic residues) spans 467–480 (KELEKSGGAEEPRG). The tract at residues 467-529 (KELEKSGGAE…VGTGEAAGGA (63 aa)) is disordered. Composition is skewed to low complexity over residues 484 to 499 (AAAARPVPGAPVPQGA) and 517 to 529 (GEAVGTGEAAGGA).

This sequence belongs to the GOLGA6 family.

This Homo sapiens (Human) protein is Putative golgin subfamily A member 6-like protein 19 (GOLGA6L19).